Reading from the N-terminus, the 664-residue chain is Trifunctional UDP-glucose 4,6-dehydratase/UDP-4-keto-6-deoxy-D-glucose 3,5-epimerase/UDP-4-keto-L-rhamnose-reductase RHM3 (664 aa).

13–19 (GAAGFIA) provides a ligand contact to NAD(+). Thr-132 contacts substrate. Asp-133 serves as the catalytic Proton donor. Catalysis depends on proton acceptor residues Glu-134 and Tyr-159. 386–392 (GKTGWLG) provides a ligand contact to NADP(+).

In the N-terminal section; belongs to the NAD(P)-dependent epimerase/dehydratase family. dTDP-glucose dehydratase subfamily. This sequence in the C-terminal section; belongs to the dTDP-4-dehydrorhamnose reductase family. The cofactor is NAD(+). It depends on NADP(+) as a cofactor. In terms of tissue distribution, expressed in roots, stems, seedlings, and siliques. Lower expression in inflorescence tips, and leaves.

The enzyme catalyses UDP-alpha-D-glucose = UDP-4-dehydro-6-deoxy-alpha-D-glucose + H2O. Its pathway is carbohydrate biosynthesis. Trifunctional enzyme involved in UDP-beta-L-rhamnose biosynthesis, a precursor of the primary cell wall components rhamnogalacturonan I (RG-I) and rhamnogalacturonan II (RG-II). Catalyzes the dehydration of UDP-glucose to form UDP-4-dehydro-6-deoxy-D-glucose followed by the epimerization of the C3' and C5' positions of UDP-4-dehydro-6-deoxy-D-glucose to form UDP-4-keto-beta-L-rhamnose and the reduction of UDP-4-keto-beta-L-rhamnose to yield UDP-beta-L-rhamnose. The polypeptide is Trifunctional UDP-glucose 4,6-dehydratase/UDP-4-keto-6-deoxy-D-glucose 3,5-epimerase/UDP-4-keto-L-rhamnose-reductase RHM3 (Arabidopsis thaliana (Mouse-ear cress)).